Here is a 132-residue protein sequence, read N- to C-terminus: Small ribosomal subunit protein uS9 (132 aa).

The protein belongs to the universal ribosomal protein uS9 family.

The protein is Small ribosomal subunit protein uS9 (rps9) of Thermoplasma volcanium (strain ATCC 51530 / DSM 4299 / JCM 9571 / NBRC 15438 / GSS1).